The chain runs to 521 residues: Bifunctional purine biosynthesis protein PurH (521 aa).

The MGS-like domain occupies 1–145 (MIKQALISVS…KNHRDVTVVV (145 aa)).

It belongs to the PurH family.

It catalyses the reaction (6R)-10-formyltetrahydrofolate + 5-amino-1-(5-phospho-beta-D-ribosyl)imidazole-4-carboxamide = 5-formamido-1-(5-phospho-D-ribosyl)imidazole-4-carboxamide + (6S)-5,6,7,8-tetrahydrofolate. It carries out the reaction IMP + H2O = 5-formamido-1-(5-phospho-D-ribosyl)imidazole-4-carboxamide. It participates in purine metabolism; IMP biosynthesis via de novo pathway; 5-formamido-1-(5-phospho-D-ribosyl)imidazole-4-carboxamide from 5-amino-1-(5-phospho-D-ribosyl)imidazole-4-carboxamide (10-formyl THF route): step 1/1. Its pathway is purine metabolism; IMP biosynthesis via de novo pathway; IMP from 5-formamido-1-(5-phospho-D-ribosyl)imidazole-4-carboxamide: step 1/1. The sequence is that of Bifunctional purine biosynthesis protein PurH from Burkholderia orbicola (strain AU 1054).